The primary structure comprises 107 residues: U1-lycotoxin-Ls1n (107 aa).

The first 20 residues, 1–20 (MMKVLVVVALLVTLISYSSS), serve as a signal peptide directing secretion. The propeptide occupies 21–41 (EGIDDLEADELLSLMANEQTR). 4 disulfide bridges follow: Cys-44–Cys-59, Cys-51–Cys-68, Cys-58–Cys-86, and Cys-70–Cys-84.

This sequence belongs to the neurotoxin 19 (CSTX) family. 04 (U1-Lctx) subfamily. Expressed by the venom gland.

The protein localises to the secreted. The sequence is that of U1-lycotoxin-Ls1n from Lycosa singoriensis (Wolf spider).